Consider the following 123-residue polypeptide: Ribosome-binding factor A (123 aa).

Belongs to the RbfA family. As to quaternary structure, monomer. Binds 30S ribosomal subunits, but not 50S ribosomal subunits or 70S ribosomes.

It localises to the cytoplasm. One of several proteins that assist in the late maturation steps of the functional core of the 30S ribosomal subunit. Associates with free 30S ribosomal subunits (but not with 30S subunits that are part of 70S ribosomes or polysomes). Required for efficient processing of 16S rRNA. May interact with the 5'-terminal helix region of 16S rRNA. The protein is Ribosome-binding factor A of Legionella pneumophila (strain Lens).